We begin with the raw amino-acid sequence, 104 residues long: L-rhamnose mutarotase (104 aa).

Tyrosine 18 is a substrate binding site. The Proton donor role is filled by histidine 22. Substrate contacts are provided by residues tyrosine 41 and 76 to 77 (WW).

This sequence belongs to the rhamnose mutarotase family. In terms of assembly, homodimer.

It is found in the cytoplasm. It catalyses the reaction alpha-L-rhamnose = beta-L-rhamnose. The protein operates within carbohydrate metabolism; L-rhamnose metabolism. Functionally, involved in the anomeric conversion of L-rhamnose. The chain is L-rhamnose mutarotase from Bacteroides thetaiotaomicron (strain ATCC 29148 / DSM 2079 / JCM 5827 / CCUG 10774 / NCTC 10582 / VPI-5482 / E50).